The following is a 145-amino-acid chain: Neuromedin-S (145 aa).

Positions 1-27 are cleaved as a signal peptide; that stretch reads MRSEKHLLPLPLLLAICCLGTLHLSSG. Propeptides lie at residues 28–89 and 92–117; these read FPQS…HEIY and FLFQ…AEYT. The residue at position 136 (Asn136) is an Asparagine amide. A propeptide spanning residues 140–145 is cleaved from the precursor; it reads VSINEH.

This sequence belongs to the NmU family. In terms of tissue distribution, expressed by the skin glands.

The protein resides in the secreted. Stimulates uterine smooth muscle contraction (EC(50)=1.6 nM). Synthetic peptide NmS-17 induces calcium mobilization in CHO cells transfected with either human FM-3/GPR66 (EC(50)=0.085 nM) or FM-4/TGR-1 (EC(50)=0.231 nM) NmU/NmS receptors. The protein is Neuromedin-S (nms) of Bombina maxima (Giant fire-bellied toad).